Here is a 562-residue protein sequence, read N- to C-terminus: MAGWSMVADEDAVDYSKTPKSLDANRSPESVNPESTGFEKKIKELISLFRPLLDSFLAEFCSADGFLPLPAMTGEGRTVDLFNLFLNVTHKGGFDAVSENGSWDEVVQESGLESYDSASAKLIYVKYLDAFGRWLNRVVAGDTDVSSVELSGISDALVARLNGFLSEVKKKYELRKGRPAKELGAELKWFISKTKRRYDKHHVGKESASNDAVKEFQGSKLAERRLEQIMILESVTQECSSPGKRKRECPLETLKWLSDVAKDPCDPSLGIVPDRSEWVSYGSEEPWKQLLLFRASRTNNDSACEKTWQKVQKMHPCLYDDSAGASYNLRERLSYEDYKRGKTGNGSDIGSSDEEDRPCALVGSKFQAKVPEWTGITPESDSKWLGTRIWPLTKEQTKANLLIERDRIGKGRQDPCGCHNPGSIECVKFHITAKRDKLKLELGPAFYMWCFDVMGECTLQYWTDLELKKIKSLMSSPPSLSPAFIHQAKMILPSKSRGKIVSYFYNVTLLQYRASQSRITPHDIDSDTDQIFLRATENENPAPEANTFQKPALLSPNKKRCR.

The ARID domain maps to 43-136; the sequence is KELISLFRPL…YLDAFGRWLN (94 aa). Residues 358–448 form the ELM2 domain; that stretch reads PCALVGSKFQ…KLELGPAFYM (91 aa).

The protein localises to the nucleus. This Arabidopsis thaliana (Mouse-ear cress) protein is AT-rich interactive domain-containing protein 1 (ARID1).